A 343-amino-acid chain; its full sequence is Ribonucleoside-diphosphate reductase small subunit (343 aa).

The Fe cation site is built by Asp-101, Glu-131, and His-134. Residue Tyr-138 is part of the active site. The helical transmembrane segment at 188-208 (ILMILIEGIFFSASFAAIAYL) threads the bilayer. The Fe cation site is built by Glu-194, Glu-228, and His-231.

Belongs to the ribonucleoside diphosphate reductase small chain family. Heterotetramer composed of a homodimer of the large subunit (R1) and a homodimer of the small subunit (R2). Larger multisubunit protein complex are also active, composed of (R1)n(R2)n. Fe cation serves as cofactor.

The protein localises to the host membrane. It carries out the reaction a 2'-deoxyribonucleoside 5'-diphosphate + [thioredoxin]-disulfide + H2O = a ribonucleoside 5'-diphosphate + [thioredoxin]-dithiol. Functionally, ribonucleoside-diphosphate reductase holoenzyme provides the precursors necessary for viral DNA synthesis. Allows virus growth in non-dividing cells, as well as reactivation from latency in infected hosts. Catalyzes the biosynthesis of deoxyribonucleotides from the corresponding ribonucleotides. The protein is Ribonucleoside-diphosphate reductase small subunit of Gallid herpesvirus 2 (strain Chicken/Md5/ATCC VR-987) (GaHV-2).